A 68-amino-acid chain; its full sequence is Translational regulator CsrA 1 (68 aa).

It belongs to the CsrA/RsmA family. In terms of assembly, homodimer; the beta-strands of each monomer intercalate to form a hydrophobic core, while the alpha-helices form wings that extend away from the core.

It localises to the cytoplasm. A key translational regulator that binds mRNA to regulate translation initiation and/or mRNA stability. Mediates global changes in gene expression, shifting from rapid growth to stress survival by linking envelope stress, the stringent response and the catabolite repression systems. Usually binds in the 5'-UTR; binding at or near the Shine-Dalgarno sequence prevents ribosome-binding, repressing translation, binding elsewhere in the 5'-UTR can activate translation and/or stabilize the mRNA. Its function is antagonized by small RNA(s). The chain is Translational regulator CsrA 1 from Coxiella burnetii (strain RSA 493 / Nine Mile phase I).